A 386-amino-acid chain; its full sequence is Protein-glutamate methylesterase/protein-glutamine glutaminase (386 aa).

The Response regulatory domain maps to 4–121 (KVLVVDDSAF…ARNRDEAVKT (118 aa)). Aspartate 55 is modified (4-aspartylphosphate). Positions 133 to 161 (PVSRTSARASTPPPVAKQPERSSEPTTAL) are disordered. The region spanning 190 to 384 (INRAYQLLAI…KAIMKEVGYS (195 aa)) is the CheB-type methylesterase domain. Residues serine 202, histidine 229, and aspartate 326 contribute to the active site.

It belongs to the CheB family. In terms of processing, phosphorylated by CheA. Phosphorylation of the N-terminal regulatory domain activates the methylesterase activity.

The protein resides in the cytoplasm. The enzyme catalyses [protein]-L-glutamate 5-O-methyl ester + H2O = L-glutamyl-[protein] + methanol + H(+). The catalysed reaction is L-glutaminyl-[protein] + H2O = L-glutamyl-[protein] + NH4(+). Its function is as follows. Involved in chemotaxis. Part of a chemotaxis signal transduction system that modulates chemotaxis in response to various stimuli. Catalyzes the demethylation of specific methylglutamate residues introduced into the chemoreceptors (methyl-accepting chemotaxis proteins or MCP) by CheR. Also mediates the irreversible deamidation of specific glutamine residues to glutamic acid. The polypeptide is Protein-glutamate methylesterase/protein-glutamine glutaminase (Idiomarina loihiensis (strain ATCC BAA-735 / DSM 15497 / L2-TR)).